A 159-amino-acid polypeptide reads, in one-letter code: MKRPSFLPVLIGTGFGSGFSPFAPGTAGALLASIIWIALYFLLPFTALLWTTAALVVLFTFAGIWAANKLESCWGEDPSRVVVDEMVGVWIPLLAVPDNDRWYWYVIAAFALFRIFDIVKPLGVRKMENFKGGVGVMMDDVLAGVYSFILIAVARWVIG.

The first 16 residues, 1 to 16 (MKRPSFLPVLIGTGFG), serve as a signal peptide directing secretion. Helical transmembrane passes span 30-50 (LLASIIWIALYFLLPFTALLW), 54-74 (ALVVLFTFAGIWAANKLESCW), 104-124 (WYVIAAFALFRIFDIVKPLGV), and 134-154 (VGVMMDDVLAGVYSFILIAVA).

The protein localises to the membrane. The enzyme catalyses a 1,2-diacyl-sn-glycero-3-phospho-(1D-myo-inositol-3-phosphate) + H2O = a 1,2-diacyl-sn-glycero-3-phospho-(1D-myo-inositol) + phosphate. Its function is as follows. May be responsible for the conversion of phosphatidylinositol phosphate diacylglycerol (PIP-DAG) to phosphatidylinositol diacylglycerol (PI-DAG), making it a key enzyme in the inositol glycerophospholipid biosynthesis pathway. The polypeptide is Putative phosphatidylinositol-3-phosphatase (Bacteroides thetaiotaomicron (strain ATCC 29148 / DSM 2079 / JCM 5827 / CCUG 10774 / NCTC 10582 / VPI-5482 / E50)).